A 62-amino-acid chain; its full sequence is Photosystem II reaction center protein Z (62 aa).

2 helical membrane-spanning segments follow: residues 8 to 28 and 41 to 61; these read AVFA…LVFA and FSGT…NSLI.

It belongs to the PsbZ family. PSII is composed of 1 copy each of membrane proteins PsbA, PsbB, PsbC, PsbD, PsbE, PsbF, PsbH, PsbI, PsbJ, PsbK, PsbL, PsbM, PsbT, PsbY, PsbZ, Psb30/Ycf12, at least 3 peripheral proteins of the oxygen-evolving complex and a large number of cofactors. It forms dimeric complexes.

It is found in the plastid. Its subcellular location is the chloroplast thylakoid membrane. In terms of biological role, may control the interaction of photosystem II (PSII) cores with the light-harvesting antenna, regulates electron flow through the 2 photosystem reaction centers. PSII is a light-driven water plastoquinone oxidoreductase, using light energy to abstract electrons from H(2)O, generating a proton gradient subsequently used for ATP formation. This is Photosystem II reaction center protein Z from Hordeum vulgare (Barley).